Reading from the N-terminus, the 207-residue chain is Ribosomal RNA small subunit methyltransferase G (207 aa).

Residues G73, L78, 124–125 (VE), and R139 each bind S-adenosyl-L-methionine.

The protein belongs to the methyltransferase superfamily. RNA methyltransferase RsmG family.

Its subcellular location is the cytoplasm. The catalysed reaction is guanosine(527) in 16S rRNA + S-adenosyl-L-methionine = N(7)-methylguanosine(527) in 16S rRNA + S-adenosyl-L-homocysteine. Functionally, specifically methylates the N7 position of guanine in position 527 of 16S rRNA. In Salmonella arizonae (strain ATCC BAA-731 / CDC346-86 / RSK2980), this protein is Ribosomal RNA small subunit methyltransferase G.